Here is a 546-residue protein sequence, read N- to C-terminus: Glucose-6-phosphate isomerase 1 (546 aa).

Glu-353 acts as the Proton donor in catalysis. Residues His-384 and Lys-512 contribute to the active site.

Belongs to the GPI family.

It is found in the cytoplasm. The catalysed reaction is alpha-D-glucose 6-phosphate = beta-D-fructose 6-phosphate. Its pathway is carbohydrate biosynthesis; gluconeogenesis. It functions in the pathway carbohydrate degradation; glycolysis; D-glyceraldehyde 3-phosphate and glycerone phosphate from D-glucose: step 2/4. In terms of biological role, catalyzes the reversible isomerization of glucose-6-phosphate to fructose-6-phosphate. This is Glucose-6-phosphate isomerase 1 from Colwellia psychrerythraea (strain 34H / ATCC BAA-681) (Vibrio psychroerythus).